A 255-amino-acid polypeptide reads, in one-letter code: MKALLALPLLLLLSTPPCAPQVSGIRGDALERFCLQQPLDCDDIYAQGYQSDGVYLIYPSGPSVPVPVFCDMTTEGGKWTVFQKRFNGSVSFFRGWNDYKLGFGRADGEYWLGLQNMHLLTLKQKYELRVDLEDFENNTAYAKYADFSISPNAVSAEEDGYTLFVAGFEDGGAGDSLSYHSGQKFSTFDRDQDLFVQNCAALSSGAFWFRSCHFANLNGFYLGGSHLSYANGINWAQWKGFYYSLKRTEMKIRRA.

The N-terminal stretch at 1–21 is a signal peptide; sequence MKALLALPLLLLLSTPPCAPQ. Residues 26–28 carry the Cell attachment site motif; it reads RGD. The Fibrinogen C-terminal domain occupies 32–255; it reads RFCLQQPLDC…KRTEMKIRRA (224 aa). Asparagine 87 and asparagine 137 each carry an N-linked (GlcNAc...) asparagine glycan.

In terms of assembly, homodimer. Can also form higher oligomers. Interacts with FBN1, FBN2 and LOX. Interacts with COL1A1 in a Ca (2+)-dependent manner. Interacts with ELN in a Ca (2+)-dependent manner; this interaction promotes ELN self-assembly.

Its subcellular location is the secreted. It is found in the extracellular space. The protein resides in the extracellular matrix. Functionally, could be involved in calcium-dependent cell adhesion or intercellular interactions. May contribute to the elastic fiber assembly and/or maintenance. This Homo sapiens (Human) protein is Microfibril-associated glycoprotein 4 (MFAP4).